The sequence spans 381 residues: Cytochrome b (381 aa).

Transmembrane regions (helical) follow at residues 34–54 (FGSLLGLCLIIQILTGLFLAM), 78–99 (WLIRNIHANGASLFFICVYLHI), 114–134 (WNIGVILLFLLMATAFVGYVL), and 179–199 (FFAFHFLLPFLILALTIIHLL). Heme b-binding residues include His-84 and His-98. Heme b-binding residues include His-183 and His-197. His-202 is an a ubiquinone binding site. 4 helical membrane passes run 227–247 (YKDLLGFFVMIFFLAVFALFM), 289–309 (LGGVLALLFSIFILMLVPLLH), 321–341 (MTQIFFWLLVANSIILTWIGG), and 348–368 (FIMVGQIASISYFSLFLIIMP).

This sequence belongs to the cytochrome b family. The cytochrome bc1 complex contains 3 respiratory subunits (MT-CYB, CYC1 and UQCRFS1), 2 core proteins (UQCRC1 and UQCRC2) and probably 6 low-molecular weight proteins. It depends on heme b as a cofactor.

The protein resides in the mitochondrion inner membrane. Functionally, component of the ubiquinol-cytochrome c reductase complex (complex III or cytochrome b-c1 complex) that is part of the mitochondrial respiratory chain. The b-c1 complex mediates electron transfer from ubiquinol to cytochrome c. Contributes to the generation of a proton gradient across the mitochondrial membrane that is then used for ATP synthesis. This Carcharhinus plumbeus (Sandbar shark) protein is Cytochrome b (mt-cyb).